Consider the following 631-residue polypeptide: RING finger protein 112 (631 aa).

The RING-type zinc finger occupies 57 to 98 (CSICLERLREPISLDCGHDFCIRCFSTHRIPGCELPCCPECR). Residues 131–631 (AVRAERLLLV…GDREPLLQEE (501 aa)) form an interaction with ZBTB16 region. Residues 166 to 397 (DTPVCLLAVL…YISDVLSTAP (232 aa)) form the GB1/RHD3-type G domain. 317 to 318 (RD) serves as a coordination point for GTP. A run of 2 helical transmembrane segments spans residues 547–567 (LAAV…GVVG) and 580–600 (GMVA…GGGV).

The protein belongs to the TRAFAC class dynamin-like GTPase superfamily. GB1/RHD3 GTPase family. GB1 subfamily. Self-associates. Interacts with SP1 in an oxidative stress-regulated manner. Interacts with SIGMAR1 in an oxidative stress-regulated manner. Interacts with ZBTB16 (via C2H2-type zinc finger domains 1 and 2). Auto-ubiquitinated. In terms of tissue distribution, predominantly expressed in brain.

The protein resides in the membrane. It localises to the cytoplasm. Its subcellular location is the nucleus. The protein localises to the nuclear body. It is found in the nucleoplasm. The protein resides in the endosome. It localises to the cytoplasmic vesicle. Its subcellular location is the secretory vesicle. The protein localises to the synaptic vesicle. It is found in the postsynaptic density. The protein resides in the perikaryon. It localises to the cell projection. Its subcellular location is the neuron projection. The catalysed reaction is S-ubiquitinyl-[E2 ubiquitin-conjugating enzyme]-L-cysteine + [acceptor protein]-L-lysine = [E2 ubiquitin-conjugating enzyme]-L-cysteine + N(6)-ubiquitinyl-[acceptor protein]-L-lysine.. It functions in the pathway protein modification; protein ubiquitination. Functionally, E3 ubiquitin-protein ligase that plays an important role in neuronal differentiation, including neurogenesis and gliogenesis, during brain development. During embryonic development initiates neuronal differentiation by inducing cell cycle arrest at the G0/G1 phase through up-regulation of cell-cycle regulatory proteins. Plays a role not only in the fetal period during the development of the nervous system, but also in the adult brain, where it is involved in the maintenance of neural functions and protection of the nervous tissue cells from oxidative stress-induced damage. Exhibits GTPase and E3 ubiquitin-protein ligase activities. Regulates dendritic spine density and synaptic neurotransmission; its ability to hydrolyze GTP is involved in the maintenance of dendritic spine density. In Rattus norvegicus (Rat), this protein is RING finger protein 112 (Rnf112).